We begin with the raw amino-acid sequence, 266 residues long: Apolipoprotein A-I (266 aa).

Residues 1 to 18 form the signal peptide; sequence MKAVVLTLAVLFLTGSQA. Repeat copies occupy residues 67-88 and 89-110. A 10 X approximate tandem repeats region spans residues 67–266; sequence LKLLDNWDTL…DEATKKLNAQ (200 aa). Methionine 109 bears the Methionine sulfoxide mark. The 3; half-length repeat unit spans residues 111 to 121; it reads KDLEEVKQKVQ. Tandem repeats lie at residues 122–143, 144–165, 166–187, 188–209, and 210–231. The stretch at 232–242 is one 9; half-length repeat; sequence PALEDLRQGLL. Repeat unit 10 spans residues 243–266; the sequence is PVLESFKVGLMAIVDEATKKLNAQ.

This sequence belongs to the apolipoprotein A1/A4/E family. As to quaternary structure, homodimer. Interacts with APOA1BP and CLU. Component of a sperm activating protein complex (SPAP), consisting of APOA1, an immunoglobulin heavy chain, an immunoglobulin light chain and albumin. Interacts with NDRG1. Interacts with SCGB3A2. Interacts with NAXE and YJEFN3. Glycosylated. In terms of processing, palmitoylated. Post-translationally, phosphorylation sites are present in the extracellular medium.

The protein localises to the secreted. Functionally, participates in the reverse transport of cholesterol from tissues to the liver for excretion by promoting cholesterol efflux from tissues and by acting as a cofactor for the lecithin cholesterol acyltransferase (LCAT). As part of the SPAP complex, activates spermatozoa motility. The polypeptide is Apolipoprotein A-I (APOA1) (Acinonyx jubatus (Cheetah)).